Reading from the N-terminus, the 85-residue chain is Small ribosomal subunit protein uS17 (85 aa).

This sequence belongs to the universal ribosomal protein uS17 family. In terms of assembly, part of the 30S ribosomal subunit.

Its function is as follows. One of the primary rRNA binding proteins, it binds specifically to the 5'-end of 16S ribosomal RNA. In Lachnospira eligens (strain ATCC 27750 / DSM 3376 / VPI C15-48 / C15-B4) (Eubacterium eligens), this protein is Small ribosomal subunit protein uS17.